Consider the following 504-residue polypeptide: Apolipoprotein N-acyltransferase (504 aa).

6 helical membrane passes run 6 to 26 (LALT…YALV), 47 to 67 (ALYG…WVFV), 83 to 103 (LTAL…WLGV), 105 to 125 (AGGG…WVVT), 153 to 173 (IAPV…AGLL), and 186 to 206 (FALL…KVQW). The CN hydrolase domain occupies 219-457 (LQGNVPQDQK…REALTGMMQP (239 aa)). Residue Glu258 is the Proton acceptor of the active site. Lys317 is an active-site residue. Catalysis depends on Cys369, which acts as the Nucleophile. A helical membrane pass occupies residues 465 to 485 (ALWGDWPAIGLCAGIVGICFA).

Belongs to the CN hydrolase family. Apolipoprotein N-acyltransferase subfamily.

The protein localises to the cell inner membrane. It carries out the reaction N-terminal S-1,2-diacyl-sn-glyceryl-L-cysteinyl-[lipoprotein] + a glycerophospholipid = N-acyl-S-1,2-diacyl-sn-glyceryl-L-cysteinyl-[lipoprotein] + a 2-acyl-sn-glycero-3-phospholipid + H(+). The protein operates within protein modification; lipoprotein biosynthesis (N-acyl transfer). In terms of biological role, catalyzes the phospholipid dependent N-acylation of the N-terminal cysteine of apolipoprotein, the last step in lipoprotein maturation. The protein is Apolipoprotein N-acyltransferase of Methylococcus capsulatus (strain ATCC 33009 / NCIMB 11132 / Bath).